Reading from the N-terminus, the 306-residue chain is Palmitoyl-protein thioesterase 1 (306 aa).

An N-terminal signal peptide occupies residues 1 to 27 (MASPSCLWLLAVALLPWTCAARALHHL). Intrachain disulfides connect Cys45-Cys46, Cys96-Cys128, and Cys152-Cys160. Residue Ser115 is part of the active site. Asn197, Asn212, and Asn232 each carry an N-linked (GlcNAc...) asparagine glycan. Active-site residues include Asp233 and His289.

Belongs to the palmitoyl-protein thioesterase family. As to quaternary structure, interacts with CLN5, ATP5F1A and ATP5F1B. Post-translationally, glycosylated.

It is found in the lysosome. The protein localises to the secreted. The protein resides in the golgi apparatus. Its subcellular location is the endoplasmic reticulum. It carries out the reaction S-hexadecanoyl-L-cysteinyl-[protein] + H2O = L-cysteinyl-[protein] + hexadecanoate + H(+). The catalysed reaction is hexadecanoyl-CoA + H2O = hexadecanoate + CoA + H(+). The enzyme catalyses S-hexadecanoyl-N-acetylcysteamine + H2O = N-acetylcysteamine + hexadecanoate + H(+). It catalyses the reaction S-hexadecanoyl-N-acetylcysteine methyl ester + H2O = N-acetylcysteine methyl ester + hexadecanoate + H(+). Its activity is regulated as follows. Palmitoylation reduces PPT1 enzymatic activity. In terms of biological role, has thioesterase activity against fatty acid thioesters with 14 -18 carbons, including palmitoyl-CoA, S-palmitoyl-N-acetylcysteamine, and palmitoylated proteins. In contrast to PPT2, PPT1 can hydrolyze palmitoylated proteins and palmitoylcysteine. This Macaca fascicularis (Crab-eating macaque) protein is Palmitoyl-protein thioesterase 1 (PPT1).